We begin with the raw amino-acid sequence, 268 residues long: Hydroxyacylglutathione hydrolase (268 aa).

Residues histidine 56, histidine 58, aspartate 60, histidine 61, histidine 112, aspartate 137, and histidine 176 each contribute to the Zn(2+) site. 176-178 (HEY) contacts substrate.

This sequence belongs to the metallo-beta-lactamase superfamily. Glyoxalase II family. In terms of assembly, monomer. Requires Zn(2+) as cofactor.

The enzyme catalyses an S-(2-hydroxyacyl)glutathione + H2O = a 2-hydroxy carboxylate + glutathione + H(+). The protein operates within secondary metabolite metabolism; methylglyoxal degradation; (R)-lactate from methylglyoxal: step 2/2. In terms of biological role, thiolesterase that catalyzes the hydrolysis of S-D-lactoyl-glutathione to form glutathione and D-lactic acid. This Dictyostelium discoideum (Social amoeba) protein is Hydroxyacylglutathione hydrolase (hagh).